The sequence spans 571 residues: 2-succinyl-5-enolpyruvyl-6-hydroxy-3-cyclohexene-1-carboxylate synthase (571 aa).

The protein belongs to the TPP enzyme family. MenD subfamily. As to quaternary structure, homodimer. The cofactor is Mg(2+). Mn(2+) is required as a cofactor. Requires thiamine diphosphate as cofactor.

The catalysed reaction is isochorismate + 2-oxoglutarate + H(+) = 5-enolpyruvoyl-6-hydroxy-2-succinyl-cyclohex-3-ene-1-carboxylate + CO2. It participates in quinol/quinone metabolism; 1,4-dihydroxy-2-naphthoate biosynthesis; 1,4-dihydroxy-2-naphthoate from chorismate: step 2/7. It functions in the pathway quinol/quinone metabolism; menaquinone biosynthesis. Catalyzes the thiamine diphosphate-dependent decarboxylation of 2-oxoglutarate and the subsequent addition of the resulting succinic semialdehyde-thiamine pyrophosphate anion to isochorismate to yield 2-succinyl-5-enolpyruvyl-6-hydroxy-3-cyclohexene-1-carboxylate (SEPHCHC). The polypeptide is 2-succinyl-5-enolpyruvyl-6-hydroxy-3-cyclohexene-1-carboxylate synthase (Lysinibacillus sphaericus (strain C3-41)).